The sequence spans 210 residues: uncharacterized protein (210 aa).

Serine 18, serine 39, serine 41, serine 57, and serine 60 each carry phosphoserine. Residues 33–46 show a composition bias toward polar residues; it reads LDLDQRSMSPSNIA. Residues 33 to 58 form a disordered region; the sequence is LDLDQRSMSPSNIASGEDRITRTNSG. Disordered stretches follow at residues 100–139 and 177–210; these read YDHN…YKVS and DSAP…NVHT. A compositionally biased stretch (polar residues) spans 102–116; it reads HNNGTKSPTPKTSNM. Basic and acidic residues predominate over residues 130–139; it reads NDKDDKYKVS. A phosphoserine mark is found at serine 178, serine 189, and serine 192. Residues 191-210 show a composition bias toward polar residues; sequence HSPSLNSMDNTTKHSSNVHT.

This is an uncharacterized protein from Saccharomyces cerevisiae (strain ATCC 204508 / S288c) (Baker's yeast).